The chain runs to 190 residues: ATP synthase subunit b (190 aa).

A helical membrane pass occupies residues 34-54 (LDIFETNLINLAILVGILFYF).

This sequence belongs to the ATPase B chain family. As to quaternary structure, F-type ATPases have 2 components, F(1) - the catalytic core - and F(0) - the membrane proton channel. F(1) has five subunits: alpha(3), beta(3), gamma(1), delta(1), epsilon(1). F(0) has four main subunits: a(1), b(1), b'(1) and c(10-14). The alpha and beta chains form an alternating ring which encloses part of the gamma chain. F(1) is attached to F(0) by a central stalk formed by the gamma and epsilon chains, while a peripheral stalk is formed by the delta, b and b' chains.

The protein resides in the cellular thylakoid membrane. Its function is as follows. F(1)F(0) ATP synthase produces ATP from ADP in the presence of a proton or sodium gradient. F-type ATPases consist of two structural domains, F(1) containing the extramembraneous catalytic core and F(0) containing the membrane proton channel, linked together by a central stalk and a peripheral stalk. During catalysis, ATP synthesis in the catalytic domain of F(1) is coupled via a rotary mechanism of the central stalk subunits to proton translocation. In terms of biological role, component of the F(0) channel, it forms part of the peripheral stalk, linking F(1) to F(0). This chain is ATP synthase subunit b, found in Nostoc punctiforme (strain ATCC 29133 / PCC 73102).